The chain runs to 365 residues: TD and POZ domain-containing protein 1-like (365 aa).

One can recognise an MATH domain in the interval 19–149 (KFCYKWTISN…EDQLTICCKV (131 aa)). The region spanning 188-255 (TDCCLLVAGH…IYTGKAPYLH (68 aa)) is the BTB domain.

This sequence belongs to the Tdpoz family.

The polypeptide is TD and POZ domain-containing protein 1-like (Mus musculus (Mouse)).